The sequence spans 36 residues: Delta-amaurobitoxin-Pl1c (36 aa).

4 disulfides stabilise this stretch: cysteine 3-cysteine 19, cysteine 10-cysteine 24, cysteine 18-cysteine 34, and cysteine 26-cysteine 32.

Expressed by the venom gland.

It localises to the secreted. In terms of biological role, binds at site 4 of sodium channels (Nav) and inhibits the fast inactivation of cockroach channels. This toxin is active only on insects. Has a potent activity against S.litura larvae. The protein is Delta-amaurobitoxin-Pl1c of Pireneitega luctuosa (Tangled nest spider).